The chain runs to 315 residues: Methionyl-tRNA formyltransferase (315 aa).

113–116 (SLLP) serves as a coordination point for (6S)-5,6,7,8-tetrahydrofolate.

Belongs to the Fmt family.

It carries out the reaction L-methionyl-tRNA(fMet) + (6R)-10-formyltetrahydrofolate = N-formyl-L-methionyl-tRNA(fMet) + (6S)-5,6,7,8-tetrahydrofolate + H(+). Attaches a formyl group to the free amino group of methionyl-tRNA(fMet). The formyl group appears to play a dual role in the initiator identity of N-formylmethionyl-tRNA by promoting its recognition by IF2 and preventing the misappropriation of this tRNA by the elongation apparatus. This Escherichia coli O6:K15:H31 (strain 536 / UPEC) protein is Methionyl-tRNA formyltransferase.